A 350-amino-acid chain; its full sequence is DNA-directed RNA polymerase subunit alpha (350 aa).

The alpha N-terminal domain (alpha-NTD) stretch occupies residues 1-226 (MLISQRPTLS…ELFGLARELN (226 aa)). Residues 241 to 350 (ADQAAHFALP…NQDYAETEQL (110 aa)) form an alpha C-terminal domain (alpha-CTD) region. The segment at 328 to 350 (GTWNSDAGYDLEDNQDYAETEQL) is disordered. The span at 336-350 (YDLEDNQDYAETEQL) shows a compositional bias: acidic residues.

It belongs to the RNA polymerase alpha chain family. In terms of assembly, homodimer. The RNAP catalytic core consists of 2 alpha, 1 beta, 1 beta' and 1 omega subunit. When a sigma factor is associated with the core the holoenzyme is formed, which can initiate transcription.

The enzyme catalyses RNA(n) + a ribonucleoside 5'-triphosphate = RNA(n+1) + diphosphate. Functionally, DNA-dependent RNA polymerase catalyzes the transcription of DNA into RNA using the four ribonucleoside triphosphates as substrates. The polypeptide is DNA-directed RNA polymerase subunit alpha (Mycolicibacterium vanbaalenii (strain DSM 7251 / JCM 13017 / BCRC 16820 / KCTC 9966 / NRRL B-24157 / PYR-1) (Mycobacterium vanbaalenii)).